The following is a 90-amino-acid chain: Large ribosomal subunit protein bL27 (90 aa).

The disordered stretch occupies residues 1–21; it reads MASKKAGGSTRNGRDSEAKRL.

Belongs to the bacterial ribosomal protein bL27 family.

This chain is Large ribosomal subunit protein bL27, found in Neisseria meningitidis serogroup C (strain 053442).